Here is a 767-residue protein sequence, read N- to C-terminus: Probable ubiquitin carboxyl-terminal hydrolase creB (767 aa).

Positions 49-462 constitute a USP domain; the sequence is YGMENYGNTC…CAYVLFYQET (414 aa). The active-site Nucleophile is the C58. Disordered regions lie at residues 107 to 140 and 232 to 263; these read EAEA…DSPE and ASKQ…KTPN. Residues 250–263 are compositionally biased toward polar residues; the sequence is SVDQSSSTGSKTPN. H413 (proton acceptor) is an active-site residue. Residues 490-767 are disordered; sequence LKQNGFPQSP…LRKKSFSILS (278 aa). Low complexity-rich tracts occupy residues 540 to 554 and 564 to 573; these read ESAP…SPLS and ERVTTVATPP. Residues 574–641 are a coiled coil; that stretch reads KNDALAKKER…ASKAEEDRRL (68 aa). Residues 577–650 are compositionally biased toward basic and acidic residues; that stretch reads ALAKKERARE…LSHENGKEKQ (74 aa). Residues 656–667 show a composition bias toward basic residues; sequence RLKRGSKSLSHR. The span at 690 to 700 shows a compositional bias: polar residues; that stretch reads STLSQTGPTSE. Residues 701-713 show a composition bias toward low complexity; sequence QQQQQQQQQQQQQ. Residues 731-749 show a composition bias toward basic and acidic residues; the sequence is TIREDEQVNHKDSKHERTG. Residues 750–767 are compositionally biased toward basic residues; that stretch reads HGKWRSFSLRKKSFSILS.

Belongs to the peptidase C19 family. In terms of assembly, interacts with creA, creC and qutD.

It carries out the reaction Thiol-dependent hydrolysis of ester, thioester, amide, peptide and isopeptide bonds formed by the C-terminal Gly of ubiquitin (a 76-residue protein attached to proteins as an intracellular targeting signal).. In terms of biological role, ubiquitin thioesterase component of the regulatory network controlling carbon source utilization through ubiquitination and deubiquitination involving creA, creB, creC, creD and acrB. Deubiquitinates the creA catabolic repressor and the quinate permease qutD. Also plays a role in response to carbon starvation and the control of extracellular proteases activity. This Aspergillus fumigatus (strain CBS 144.89 / FGSC A1163 / CEA10) (Neosartorya fumigata) protein is Probable ubiquitin carboxyl-terminal hydrolase creB (creB).